We begin with the raw amino-acid sequence, 801 residues long: MGSKIVEKKRKSRDSDSESDNELGDGLFDGVLSQSEDEEDYIPSSEVDEDDDDDADESASEDSDDSNDSEDDEVEEDDEALLSDEIPSEGESEKDQDLAESKESKQDQDKEPSEPEILEPFVDPPRKEDEELEDRNYRIEKDANGGIRYVYDEIDPVYDSDDTDYNVPVNTIGNIPLSFYDSYPHIGYDINGKKIMRPATGDALQNLLDSIEVPEGWTGLTDPNTGKPLNLSRDELELIRKVQQGLIPDDVEDPYPDTVEWFTSVEEKMPLSAAPEPKRRFIPSKNEAKQIMKLVRAIREGRILPYKPPEEREREELEKEEEFYDLWQNEEPQPPNPMHIPAPKLPPPGYDLSYNPPPEYLPTKEEREEWEKMDPEDREKDYLPTKYDSLRKVPAWGNFVKERFERCMDLYLAPRVRKNRLNIDPNSLLPKLPSPDELKPFPTVQQTIFRGHEGRVRSVAIDPTGVALATGGDDGTVRVWELLTGRQVWSVKLNGDEAVNTVRWRPTKDTFILAAAAGEDIFLMIPTHPSVTPALDQASRDILNAGFGHATNGKQQANLPPGKEPPGKWARPGTRLEDEGVLLRITVRSTIKAISWHRRGDHFATVSPSGQRSSVAIHTLSKHLTQIPFRKLNGLAQTASFHPLRPLFFVATQRSIRCYDLQKLELVKIVQPGAKWISSFDVHPGGDNLVVGSYDKRLLWHDLDLSNRPYKTMRFHTEAIRAVRFHKGGLPLFADASDDGSLQIFHGKVPNDQLENPTIVPVKMLKGHKVVNKLGVLDIDWHPREPWCVSAGADGTARLWM.

Disordered regions lie at residues methionine 1–arginine 135 and proline 358–aspartate 377. Positions serine 35 to glycine 90 are enriched in acidic residues. 3 stretches are compositionally biased toward basic and acidic residues: residues glutamate 91–serine 113, proline 124–arginine 135, and proline 362–aspartate 377. WD repeat units lie at residues glycine 451 to serine 490 and asparagine 494 to alanine 534. The tract at residues glycine 546–alanine 570 is disordered. WD repeat units lie at residues threonine 586–proline 628, lysine 631–isoleucine 669, proline 672–lysine 711, phenylalanine 715–glutamate 755, and valine 771–methionine 801.

Belongs to the WD repeat BOP1/ERB1 family. Component of the NOP7 complex, composed of ERB1, NOP7 and YTM1. The complex is held together by ERB1, which interacts with NOP7 via its N-terminal domain and with YTM1 via a high-affinity interaction between the seven-bladed beta-propeller domains of the 2 proteins. The NOP7 complex associates with the 66S pre-ribosome.

The protein resides in the nucleus. Its subcellular location is the nucleolus. It localises to the nucleoplasm. In terms of biological role, component of the NOP7 complex, which is required for maturation of the 25S and 5.8S ribosomal RNAs and formation of the 60S ribosome. This is Ribosome biogenesis protein ERB1 from Chaetomium thermophilum (strain DSM 1495 / CBS 144.50 / IMI 039719) (Thermochaetoides thermophila).